The following is a 126-amino-acid chain: Aspartate 1-decarboxylase (126 aa).

Catalysis depends on Ser25, which acts as the Schiff-base intermediate with substrate; via pyruvic acid. Ser25 is modified (pyruvic acid (Ser)). A substrate-binding site is contributed by Thr57. Tyr58 (proton donor) is an active-site residue. 73–75 (GGA) is a substrate binding site.

Belongs to the PanD family. In terms of assembly, heterooctamer of four alpha and four beta subunits. The cofactor is pyruvate. Post-translationally, is synthesized initially as an inactive proenzyme, which is activated by self-cleavage at a specific serine bond to produce a beta-subunit with a hydroxyl group at its C-terminus and an alpha-subunit with a pyruvoyl group at its N-terminus.

Its subcellular location is the cytoplasm. The catalysed reaction is L-aspartate + H(+) = beta-alanine + CO2. Its pathway is cofactor biosynthesis; (R)-pantothenate biosynthesis; beta-alanine from L-aspartate: step 1/1. Its function is as follows. Catalyzes the pyruvoyl-dependent decarboxylation of aspartate to produce beta-alanine. The chain is Aspartate 1-decarboxylase from Stenotrophomonas maltophilia (strain R551-3).